We begin with the raw amino-acid sequence, 285 residues long: Sulfur carrier protein TtuD (285 aa).

Rhodanese domains lie at 20-127 (EDPK…PLTT) and 161-281 (KEGK…VPIA). Position 240 is a cysteine persulfide (Cys240).

Cys-240 can accept a sulfur atom as persulfide forms from cysteine desulfurases IscS and SufS.

It functions in the pathway tRNA modification. In terms of biological role, required for the efficient 2-thiolation of 5-methyluridine residue at position 54 in the T loop of tRNAs, leading to 5-methyl-2-thiouridine (m(5)s(2)U or s(2)T). TtuD is a sulfur carrier protein that has a role to direct sulfur flow from cysteine desulfurases to m(5)s(2)U synthesis in vivo. It enhances the cysteine desulfurase activity of IscS and SufS, as well as the formation of thiocarboxylated TtuB (TtuB-COSH) in the presence of these desulfurases. This chain is Sulfur carrier protein TtuD, found in Thermus thermophilus (strain ATCC BAA-163 / DSM 7039 / HB27).